Consider the following 568-residue polypeptide: Proline--tRNA ligase (568 aa).

This sequence belongs to the class-II aminoacyl-tRNA synthetase family. ProS type 1 subfamily. As to quaternary structure, homodimer.

Its subcellular location is the cytoplasm. The catalysed reaction is tRNA(Pro) + L-proline + ATP = L-prolyl-tRNA(Pro) + AMP + diphosphate. Catalyzes the attachment of proline to tRNA(Pro) in a two-step reaction: proline is first activated by ATP to form Pro-AMP and then transferred to the acceptor end of tRNA(Pro). As ProRS can inadvertently accommodate and process non-cognate amino acids such as alanine and cysteine, to avoid such errors it has two additional distinct editing activities against alanine. One activity is designated as 'pretransfer' editing and involves the tRNA(Pro)-independent hydrolysis of activated Ala-AMP. The other activity is designated 'posttransfer' editing and involves deacylation of mischarged Ala-tRNA(Pro). The misacylated Cys-tRNA(Pro) is not edited by ProRS. This is Proline--tRNA ligase from Halorhodospira halophila (strain DSM 244 / SL1) (Ectothiorhodospira halophila (strain DSM 244 / SL1)).